The primary structure comprises 206 residues: Heterochromatin protein 1 (206 aa).

Disordered stretches follow at residues 1 to 24 (MGKK…EEEY) and 47 to 145 (GYPE…GFDR). Residues Ser-11 and Ser-15 each carry the phosphoserine modification. A Chromo 1 domain is found at 24 to 82 (YAVEKIIDRRVRKGKVEYYLKWKGYPETENTWEPENNLDCQDLIQQYEASRKDEEKSAA). Positions 50–60 (ETENTWEPENN) are enriched in low complexity. Basic and acidic residues predominate over residues 72 to 98 (ASRKDEEKSAASKKDRPSSSAKAKETQ). A binds to Su(var)39 region spans residues 95–206 (KETQGRASSS…RLSWYSDNED (112 aa)). Phosphoserine occurs at positions 102, 103, and 113. Phosphothreonine occurs at positions 127, 128, and 134. The Chromo 2 domain occupies 147 to 205 (LEAEKILGASDNNGRLTFLIQFKGVDQAEMVPSSVANEKIPRMVIHFYEERLSWYSDNE).

Homodimer. Probably associates with Su(var)3-9. Interacts with Mcm10. Interacts (via chromoshadow domain) with piwi (via N-terminal region). Interacts with Rrp6. Associates with and may be part of the HipHop-HOAP telomere capping complex but is not required for its stability or telomere localization. Interacts (via the chromo domain 2 (chromoshadow domain) and the hinge region between chromo domains 1 and 2) with cav/HOAP (via C-terminus); the interaction is direct. Each molecule of cav/HOAP interacts with 2 molecules of Su(var)205/HP1. Interacts with HipHop (via N-terminus). Interacts with moi/modigliani; the interaction is direct. Interacts (via chromo domain 1) with His3/histone 3 (via N-terminal tail methylated at 'Lys-10'); the interaction is direct. As to expression, salivary gland (at protein level).

The protein resides in the nucleus. The protein localises to the nucleoplasm. Its subcellular location is the chromosome. It is found in the telomere. Structural component of heterochromatin, involved in gene repression and the modification of position-effect-variegation. Recognizes and binds histone H3 tails methylated at 'Lys-9', leading to epigenetic repression. Stabilizes chromatin-associated RNAs probably by binding to them and thereby preventing their degradation. Associates with, and may be a part of, the HipHop-HOAP complex that recruits the MTV complex to form the terminin telomere-capping complex, which binds to chromosome ends in a sequence-independent manner and prevents telomere fusion. Telomere capping is independent of the origin recognition complex (ORC). In Drosophila melanogaster (Fruit fly), this protein is Heterochromatin protein 1.